A 142-amino-acid polypeptide reads, in one-letter code: Large ribosomal subunit protein uL11 (142 aa).

The protein belongs to the universal ribosomal protein uL11 family. In terms of assembly, part of the ribosomal stalk of the 50S ribosomal subunit. Interacts with L10 and the large rRNA to form the base of the stalk. L10 forms an elongated spine to which L12 dimers bind in a sequential fashion forming a multimeric L10(L12)X complex. Post-translationally, one or more lysine residues are methylated.

Forms part of the ribosomal stalk which helps the ribosome interact with GTP-bound translation factors. The protein is Large ribosomal subunit protein uL11 of Bradyrhizobium sp. (strain ORS 278).